Here is a 113-residue protein sequence, read N- to C-terminus: Large ribosomal subunit protein bL19 (113 aa).

The protein belongs to the bacterial ribosomal protein bL19 family.

Its function is as follows. This protein is located at the 30S-50S ribosomal subunit interface and may play a role in the structure and function of the aminoacyl-tRNA binding site. The polypeptide is Large ribosomal subunit protein bL19 (Corynebacterium urealyticum (strain ATCC 43042 / DSM 7109)).